Consider the following 141-residue polypeptide: Cholinesterase (141 aa).

N39 carries N-linked (GlcNAc...) asparagine glycosylation. Position 49 to 50 (G49 to G50) interacts with substrate. The Acyl-ester intermediate role is filled by S131. Position 131 is a phosphoserine (S131).

The protein belongs to the type-B carboxylesterase/lipase family. As to quaternary structure, homotetramer; disulfide-linked. Dimer of dimers. In terms of tissue distribution, present in most cells except erythrocytes.

The protein resides in the secreted. The enzyme catalyses an acylcholine + H2O = a carboxylate + choline + H(+). Functionally, esterase with broad substrate specificity. Contributes to the inactivation of the neurotransmitter acetylcholine. Can degrade neurotoxic organophosphate esters. This chain is Cholinesterase (BCHE), found in Sus scrofa (Pig).